Consider the following 608-residue polypeptide: Elongation factor 4 (608 aa).

Positions 11-193 (SHIRNFSIVA…AIVHKLPAPK (183 aa)) constitute a tr-type G domain. Residues 23–28 (DHGKST) and 140–143 (NKID) contribute to the GTP site.

Belongs to the TRAFAC class translation factor GTPase superfamily. Classic translation factor GTPase family. LepA subfamily.

Its subcellular location is the cell inner membrane. The enzyme catalyses GTP + H2O = GDP + phosphate + H(+). Functionally, required for accurate and efficient protein synthesis under certain stress conditions. May act as a fidelity factor of the translation reaction, by catalyzing a one-codon backward translocation of tRNAs on improperly translocated ribosomes. Back-translocation proceeds from a post-translocation (POST) complex to a pre-translocation (PRE) complex, thus giving elongation factor G a second chance to translocate the tRNAs correctly. Binds to ribosomes in a GTP-dependent manner. The sequence is that of Elongation factor 4 from Rhizobium meliloti (strain 1021) (Ensifer meliloti).